We begin with the raw amino-acid sequence, 505 residues long: MSEQHAQGADAVVDLNNELKTRREKLANLREQGIAFPNDFRRDHTSDQLHTEFDGKENEELEALNIEVAVAGRMMTRRIMGKASFVTLQDVGGRIQLYVARDDLPEGVYNEQFKKWDLGDILGAKGKLFKTKTGELSIHCTELRLLTKALRPLPDKFHGLQDQEARYRQRYLDLISNDESRNTFKVRSQILSGIRQFMVNRGFMEVETPMMQVIPGGAAARPFITHHNALDLDMYLRIAPELYLKRLVVGGFERVFEINRNFRNEGISVRHNPEFTMMELYMAYADYKDLIELTESLFRTLAQNILGKTEVTYGDVTLDFGKPFEKLTMREAIKKYRPETDMADLDNFDSAKAIAESIGIHVEKSWGLGRIVTEIFEEVAEAHLIQPTFITEYPAEVSPLARRNDVNPEITDRFEFFIGGREIGNGFSELNDAEDQAQRFLDQVAAKDAGDDEAMFYDEDYVTALEHGLPPTAGLGIGIDRMVMLFTNSHTIRDVILFPAMRPVK.

Mg(2+) contacts are provided by E415 and E422.

This sequence belongs to the class-II aminoacyl-tRNA synthetase family. As to quaternary structure, homodimer. The cofactor is Mg(2+).

Its subcellular location is the cytoplasm. It catalyses the reaction tRNA(Lys) + L-lysine + ATP = L-lysyl-tRNA(Lys) + AMP + diphosphate. This is Lysine--tRNA ligase from Shigella dysenteriae serotype 1 (strain Sd197).